The following is an 856-amino-acid chain: Facilitated trehalose transporter Tret1 (856 aa).

Disordered regions lie at residues 1–27 (MSGR…GKLK) and 62–202 (DPFL…KATS). The Cytoplasmic portion of the chain corresponds to 1–389 (MSGRDNRGAG…LEVYRPTTNP (389 aa)). Over residues 69-80 (VSPQRHPQTVRT) the composition is skewed to polar residues. Over residues 133-142 (EIREHRDRQQ) the composition is skewed to basic and acidic residues. Residues 170 to 180 (GNSNTNNNKAA) show a composition bias toward polar residues. Residues S247, S248, S249, S319, and S321 each carry the phosphoserine modification. The segment at 326–345 (LTSRQHFQQQRSISTDSRKS) is disordered. Polar residues predominate over residues 329–340 (RQHFQQQRSIST). The helical transmembrane segment at 390-410 (IFIWTQVLAALSVSLGSLVVG) threads the bilayer. Over 411–439 (FVSAYTSPALVSMTDRNITSFEVTQDAGS) the chain is Extracellular. N-linked (GlcNAc...) asparagine glycosylation is present at N427. The chain crosses the membrane as a helical span at residues 440–460 (WVGGIMPLAGLAGGIAGGPLI). Topologically, residues 461–472 (EYLGRRNTILAT) are cytoplasmic. The helical transmembrane segment at 473–493 (AVPFIVSSLLIACAVNVAMVL) threads the bilayer. Over 494 to 496 (CGR) the chain is Extracellular. The helical transmembrane segment at 497-517 (FLAGFCVGIASLSLPVYLGET) threads the bilayer. Residues 518 to 527 (VQPEVRGTLG) lie on the Cytoplasmic side of the membrane. The chain crosses the membrane as a helical span at residues 528–548 (LLPTAFGNIGILLCFVAGSFM). N549 is a glycosylation site (N-linked (GlcNAc...) asparagine). Over 549 to 551 (NWS) the chain is Extracellular. The chain crosses the membrane as a helical span at residues 552 to 572 (MLAFLGAALPVPFLILMFLIP). The Cytoplasmic segment spans residues 573–635 (ETPRWFVSRG…ELLKRNNLKP (63 aa)). Residues 636–656 (LSISLGLMFFQQLSGINAVIF) form a helical membrane-spanning segment. At 657-672 (YTVQIFKDAGSTIDGN) the chain is on the extracellular side. A helical transmembrane segment spans residues 673 to 693 (ICTIIVGVVNFLATFIGIVLI). The Cytoplasmic portion of the chain corresponds to 694–699 (DRAGRK). Residues 700–720 (ILLYVSNIAMILTLFVLGGFF) traverse the membrane as a helical segment. The Extracellular portion of the chain corresponds to 721–739 (YCKAHGPDVSNLGWLPLTC). Residues 740-760 (FVIYILGFSLGFGPIPWLMMG) form a helical membrane-spanning segment. The Cytoplasmic segment spans residues 761 to 766 (EILPAK). The chain crosses the membrane as a helical span at residues 767–787 (IRGSAASVATAFNWSCTFVVT). The Extracellular segment spans residues 788-800 (KTFQDLTVAMGAH). Residues 801–821 (GAFWLFGAICFVGLFFVIIYV) traverse the membrane as a helical segment. Residues 822–856 (PETQGKTLEDIERKMMGRVRRMSSVANIKPLSFNM) lie on the Cytoplasmic side of the membrane. Phosphoserine is present on residues S844 and S845.

This sequence belongs to the major facilitator superfamily. Sugar transporter (TC 2.A.1.1) family. Trehalose transporter subfamily.

It localises to the cell membrane. Low-capacity facilitative transporter for trehalose. Does not transport maltose, sucrose or lactose. Mediates the bidirectional transfer of trehalose. Responsible for the transport of trehalose synthesized in the fat body and the incorporation of trehalose into other tissues that require a carbon source, thereby regulating trehalose levels in the hemolymph. This Drosophila erecta (Fruit fly) protein is Facilitated trehalose transporter Tret1.